A 313-amino-acid chain; its full sequence is Probable cell division protein WhiA (313 aa).

The segment at residues serine 275–alanine 308 is a DNA-binding region (H-T-H motif).

This sequence belongs to the WhiA family.

Its function is as follows. Involved in cell division and chromosome segregation. This chain is Probable cell division protein WhiA, found in Desulforudis audaxviator (strain MP104C).